Here is a 589-residue protein sequence, read N- to C-terminus: Ubiquilin-1 (589 aa).

Gly residues predominate over residues 1–11 (MAESGESGGPP). Disordered regions lie at residues 1-35 (MAES…AEPK) and 110-145 (NRPQ…ATSN). A2 carries the N-acetylalanine modification. The span at 12 to 35 (GSQDSAAGAEGAGAPAAAASAEPK) shows a compositional bias: low complexity. The region spanning 37–111 (MKVTVKTPKE…VHLVIKTQNR (75 aa)) is the Ubiquitin-like domain. The segment covering 110–124 (NRPQDHSAQQTNTAG) has biased composition (polar residues). The segment covering 125-145 (SNVTTSSTPNSNSTSGSATSN) has biased composition (low complexity). The interaction with UBXN4 stretch occupies residues 178-428 (QLLSNPEMMV…LNNPLFAGNP (251 aa)). STI1 domains lie at 182–210 (NPEM…QLIM) and 212–251 (NPQM…MQEM). Residues 295-371 (PFASLVSNTS…NLVPGVGASM (77 aa)) form a disordered region. The segment covering 299–313 (LVSNTSSGEGSQPSR) has biased composition (polar residues). Residues 327–360 (QTSQSSSASSGTASTVGGTTGSTASGTSGQSTTA) show a composition bias toward low complexity. STI1 domains follow at residues 387–434 (NPQL…QEQM) and 438–470 (LPTF…QQGL). Residues 488-520 (LGALGSTGGSSGTNGSNATPSENTSPTAGTTEP) form a disordered region. Over residues 489 to 499 (GALGSTGGSSG) the composition is skewed to gly residues. Polar residues predominate over residues 509–520 (ENTSPTAGTTEP). Positions 546–586 (RFQQQLEQLSAMGFLNREANLQALIATGGDINAAIERLLGS) constitute a UBA domain.

In terms of assembly, monomer and homodimer. Heterodimer with UBQLN2. Binds CD47, NBL1, GABRA1, GABRA2, GABRA3, GABRA6, GABRB1, GABRB2 and GABRB3. Binds UBE3A, BTRC, P4HB and MTOR. Interacts with the proteasome 19S subunit. Interacts (via ubiquitin-like domain) with TREX1; the interaction is direct and may control TREX1 subcellular location. Forms a complex with UBXN4 and VCP. Interacts (via UBA domain) with UBQLN4 (via ubiquitin-like domain). Found in a complex with UBQLN2 and MAP1LC3A/B/C. The monomeric form interacts with PSEN2. The monomeric form interacts with PSEN1. Interacts with ORAI1. Interacts (via UBA domain) with TICAM1. Interacts with EPS15. Interacts (via UBA domain) with UBA52 and (via ubiquitin-like domain) with PSMD3 and PSMD4. Interacts with HERPUD1. Interacts with MAP1LC3A/B/C in the presence of UBQLN4. Interacts (via ubiquitin-like domain) with EPS15 (via UIM domains) and both the ubiquitinated and non-ubiquitinated forms can interact with EPS15. Interacts (via ubiquitin-like domain) with EPS15L1, HGS (via UIM domain) and STAM2 (via UIM domain). Interacts with BCL2L10/BCL-B; in the cytoplasm. As to quaternary structure, monomeric form interacts with PSEN1. Post-translationally, degraded during both macroautophagy and during chaperone-mediated autophagy (CMA). Phosphorylated. In terms of processing, ubiquitinated. As to expression, brain (at protein level). Ubiquitous. Highly expressed throughout the brain; detected in neurons and in neuropathological lesions, such as neurofibrillary tangles and Lewy bodies. Highly expressed in heart, placenta, pancreas, lung, liver, skeletal muscle and kidney.

It is found in the cytoplasm. The protein localises to the nucleus. The protein resides in the endoplasmic reticulum. It localises to the cytoplasmic vesicle. Its subcellular location is the autophagosome. It is found in the cell membrane. Its function is as follows. Plays an important role in the regulation of different protein degradation mechanisms and pathways including ubiquitin-proteasome system (UPS), autophagy and endoplasmic reticulum-associated protein degradation (ERAD) pathway. Mediates the proteasomal targeting of misfolded or accumulated proteins for degradation by binding (via UBA domain) to their polyubiquitin chains and by interacting (via ubiquitin-like domain) with the subunits of the proteasome. Plays a role in the ERAD pathway via its interaction with ER-localized proteins UBXN4, VCP and HERPUD1 and may form a link between the polyubiquitinated ERAD substrates and the proteasome. Involved in the regulation of macroautophagy and autophagosome formation; required for maturation of autophagy-related protein LC3 from the cytosolic form LC3-I to the membrane-bound form LC3-II and may assist in the maturation of autophagosomes to autolysosomes by mediating autophagosome-lysosome fusion. Negatively regulates the TICAM1/TRIF-dependent toll-like receptor signaling pathway by decreasing the abundance of TICAM1 via the autophagic pathway. Promotes the ubiquitination and lysosomal degradation of ORAI1, consequently down-regulating the ORAI1-mediated Ca2+ mobilization. Suppresses the maturation and proteasomal degradation of amyloid beta A4 protein (A4) by stimulating the lysine 63 (K63)-linked polyubiquitination. Delays the maturation of A4 by sequestering it in the Golgi apparatus and preventing its transport to the cell surface for subsequent processing. Ubiquitinates BCL2L10 and thereby stabilizes protein abundance. Plays a role in unfolded protein response (UPR) by attenuating the induction of UPR-inducible genes, DDTI3/CHOP, HSPA5 and PDIA2 during ER stress. Plays a key role in the regulation of the levels of PSEN1 by targeting its accumulation to aggresomes which may then be removed from cells by autophagocytosis. Functionally, plays a role in unfolded protein response (UPR) by attenuating the induction of UPR-inducible genes, DDTI3/CHOP, HSPA5 and PDIA2 during ER stress. The chain is Ubiquilin-1 (UBQLN1) from Homo sapiens (Human).